We begin with the raw amino-acid sequence, 255 residues long: 3-deoxy-manno-octulosonate cytidylyltransferase (255 aa).

This sequence belongs to the KdsB family.

The protein resides in the cytoplasm. It carries out the reaction 3-deoxy-alpha-D-manno-oct-2-ulosonate + CTP = CMP-3-deoxy-beta-D-manno-octulosonate + diphosphate. It participates in nucleotide-sugar biosynthesis; CMP-3-deoxy-D-manno-octulosonate biosynthesis; CMP-3-deoxy-D-manno-octulosonate from 3-deoxy-D-manno-octulosonate and CTP: step 1/1. Its pathway is bacterial outer membrane biogenesis; lipopolysaccharide biosynthesis. In terms of biological role, activates KDO (a required 8-carbon sugar) for incorporation into bacterial lipopolysaccharide in Gram-negative bacteria. The polypeptide is 3-deoxy-manno-octulosonate cytidylyltransferase (Saccharophagus degradans (strain 2-40 / ATCC 43961 / DSM 17024)).